The sequence spans 371 residues: COP9 signalosome complex subunit 5 (371 aa).

Residues 51 to 188 (VKISAVALIK…IGAFRTYPEG (138 aa)) enclose the MPN domain. Residues H134, H136, and D147 each coordinate Zn(2+). The short motif at 134-147 (HSHPGYGCWLSGID) is the JAMM motif element. The segment covering 278–292 (NSSSKLKLKPTQPTT) has biased composition (low complexity). Disordered regions lie at residues 278-333 (NSSS…SRIT) and 352-371 (TPLT…QGRY). Residues 293–313 (KGKETTEGSDKKLKKGEKEFS) show a composition bias toward basic and acidic residues. Residues 323–333 (NKVTQESSRIT) show a composition bias toward polar residues.

Belongs to the peptidase M67A family. CSN5 subfamily. As to quaternary structure, component of the COP9 signalosome (CSN) complex.

The protein localises to the cytoplasm. The protein resides in the nucleus. Its function is as follows. Catalytic Component of the COP9 signalosome (CSN) complex that acts as an regulator of the ubiquitin (Ubl) conjugation pathway by mediating the deneddylation of the cullin subunit of SCF-type E3 ubiquitin-protein ligase complexes. The chain is COP9 signalosome complex subunit 5 (RRI1) from Cryptococcus neoformans var. neoformans serotype D (strain B-3501A) (Filobasidiella neoformans).